Reading from the N-terminus, the 502-residue chain is 1-aminocyclopropane-1-carboxylate synthase-like protein 1 (502 aa).

The segment at 15–35 (CPGSDSIQDLPSNKGDGLERE) is disordered. Glu-106 is a substrate binding site. N6-(pyridoxal phosphate)lysine is present on Lys-324.

This sequence belongs to the class-I pyridoxal-phosphate-dependent aminotransferase family.

Functionally, does not catalyze the synthesis of 1-aminocyclopropane-1-carboxylate but is capable of catalyzing the deamination of L-vinylglycine. This Bos taurus (Bovine) protein is 1-aminocyclopropane-1-carboxylate synthase-like protein 1 (ACCS).